The primary structure comprises 299 residues: Pyridoxal 5'-phosphate synthase subunit PdxS (299 aa).

A D-ribose 5-phosphate-binding site is contributed by Asp24. The active-site Schiff-base intermediate with D-ribose 5-phosphate is the Lys81. Position 153 (Gly153) interacts with D-ribose 5-phosphate. Arg165 is a D-glyceraldehyde 3-phosphate binding site. Residues Gly219 and 240 to 241 (GS) contribute to the D-ribose 5-phosphate site.

This sequence belongs to the PdxS/SNZ family. In terms of assembly, in the presence of PdxT, forms a dodecamer of heterodimers.

It catalyses the reaction aldehydo-D-ribose 5-phosphate + D-glyceraldehyde 3-phosphate + L-glutamine = pyridoxal 5'-phosphate + L-glutamate + phosphate + 3 H2O + H(+). Its pathway is cofactor biosynthesis; pyridoxal 5'-phosphate biosynthesis. Functionally, catalyzes the formation of pyridoxal 5'-phosphate from ribose 5-phosphate (RBP), glyceraldehyde 3-phosphate (G3P) and ammonia. The ammonia is provided by the PdxT subunit. Can also use ribulose 5-phosphate and dihydroxyacetone phosphate as substrates, resulting from enzyme-catalyzed isomerization of RBP and G3P, respectively. This Methanococcus maripaludis (strain DSM 14266 / JCM 13030 / NBRC 101832 / S2 / LL) protein is Pyridoxal 5'-phosphate synthase subunit PdxS.